We begin with the raw amino-acid sequence, 240 residues long: Lactate utilization protein C (240 aa).

This sequence belongs to the LutC/YkgG family.

Is involved in L-lactate degradation and allows cells to grow with lactate as the sole carbon source. In Geobacillus thermodenitrificans (strain NG80-2), this protein is Lactate utilization protein C.